Reading from the N-terminus, the 79-residue chain is UPF0180 protein BCAH187_A1552 (79 aa).

This sequence belongs to the UPF0180 family.

In Bacillus cereus (strain AH187), this protein is UPF0180 protein BCAH187_A1552.